The chain runs to 548 residues: MAMKIPKSGYNRFMKEGAQHFKGTDEAVQRNIEACTELASQIRSAYGPNGMNKMVINHIEKLFVTNDAATILKELEIQHPAAKIIIMATEMQEKQIGDNTNTVVILAAALLEHASNLINMGMTPQEVAAGYEQAAEKALEILPSLVVKEASDMKNIEEVRQYLRSAITSKQYDNEDVIADLVAKACVTTCPANSYNFNVDNIRICKIIGSGVHTSKVMNGMVFKRGAEGEIRSAQDARIAVYTCPFDLTQTETKGTVLIENADELVNFSKGEESEVEEQVKAIADNGVKVVVAAGKFGDLYLHFLNKYKIMAVRLTSKFDLRRLCRTVGAQPQARICAPAVNLLGHCDSVSVTEIGDENVVVFDKNSETGKVATIIIRGSSQSRIDDVERAVDDAVNTYKALTKDGKLLAGAGAVEIELAKEIESYGAKAPGLEQYAIKKFAHALETLPKAIAENAGMPTTETLTKLYAEHVNGKKNAGIDVWKREVMDAVAHNIFDLYAGKRLAIKLATDAAATILKVDQIIMAKQATGGPKPRGPKQQDEDDDGMA.

The tract at residues 528–548 (ATGGPKPRGPKQQDEDDDGMA) is disordered.

The protein belongs to the TCP-1 chaperonin family. Heterooligomeric complex.

It localises to the cytoplasm. Molecular chaperone; assists the folding of proteins upon ATP hydrolysis. Known to play a role, in vitro, in the folding of actin and tubulin. Required for correct subcellular localization of pgl-1. This is T-complex protein 1 subunit theta from Caenorhabditis briggsae.